The chain runs to 306 residues: Ribosomal protein L11 methyltransferase (306 aa).

The S-adenosyl-L-methionine site is built by Thr139, Gly173, Asp195, and Asn242.

The protein belongs to the methyltransferase superfamily. PrmA family.

It localises to the cytoplasm. The enzyme catalyses L-lysyl-[protein] + 3 S-adenosyl-L-methionine = N(6),N(6),N(6)-trimethyl-L-lysyl-[protein] + 3 S-adenosyl-L-homocysteine + 3 H(+). In terms of biological role, methylates ribosomal protein L11. The sequence is that of Ribosomal protein L11 methyltransferase from Nostoc sp. (strain PCC 7120 / SAG 25.82 / UTEX 2576).